The sequence spans 310 residues: tRNA-cytidine(32) 2-sulfurtransferase (310 aa).

The short motif at 47 to 52 is the PP-loop motif element; sequence SGGKDS. C122, C125, and C213 together coordinate [4Fe-4S] cluster.

This sequence belongs to the TtcA family. In terms of assembly, homodimer. Mg(2+) is required as a cofactor. The cofactor is [4Fe-4S] cluster.

The protein localises to the cytoplasm. It catalyses the reaction cytidine(32) in tRNA + S-sulfanyl-L-cysteinyl-[cysteine desulfurase] + AH2 + ATP = 2-thiocytidine(32) in tRNA + L-cysteinyl-[cysteine desulfurase] + A + AMP + diphosphate + H(+). It functions in the pathway tRNA modification. Catalyzes the ATP-dependent 2-thiolation of cytidine in position 32 of tRNA, to form 2-thiocytidine (s(2)C32). The sulfur atoms are provided by the cysteine/cysteine desulfurase (IscS) system. This chain is tRNA-cytidine(32) 2-sulfurtransferase, found in Cronobacter sakazakii (strain ATCC BAA-894) (Enterobacter sakazakii).